The following is a 262-amino-acid chain: Phosphatidylglycerol--prolipoprotein diacylglyceryl transferase (262 aa).

4 helical membrane passes run 9–29, 41–61, 80–100, and 109–129; these read LGPLAIRWYALCIVTGLILAV, IIPDDILDFILVAFPLAILGA, IFAIWNGGLAIYGGLITGALV, and LINTWDFLDIAAPSVMIAQSL. R131 contributes to the a 1,2-diacyl-sn-glycero-3-phospho-(1'-sn-glycerol) binding site. Transmembrane regions (helical) follow at residues 167–187, 197–217, and 227–247; these read QPTFLYESLWNLLGFALILIF, GHITAFYLIWYGFGRMVIEGM, and LRVSQWLSVVLIGLGIMIVIY.

The protein belongs to the Lgt family.

The protein resides in the cell membrane. It carries out the reaction L-cysteinyl-[prolipoprotein] + a 1,2-diacyl-sn-glycero-3-phospho-(1'-sn-glycerol) = an S-1,2-diacyl-sn-glyceryl-L-cysteinyl-[prolipoprotein] + sn-glycerol 1-phosphate + H(+). Its pathway is protein modification; lipoprotein biosynthesis (diacylglyceryl transfer). Functionally, catalyzes the transfer of the diacylglyceryl group from phosphatidylglycerol to the sulfhydryl group of the N-terminal cysteine of a prolipoprotein, the first step in the formation of mature lipoproteins. This Streptococcus pneumoniae (strain JJA) protein is Phosphatidylglycerol--prolipoprotein diacylglyceryl transferase.